We begin with the raw amino-acid sequence, 80 residues long: Bowman-Birk type proteinase inhibitor (80 aa).

7 disulfides stabilise this stretch: cysteine 19-cysteine 70, cysteine 20-cysteine 35, cysteine 23-cysteine 66, cysteine 25-cysteine 33, cysteine 41-cysteine 47, cysteine 44-cysteine 59, and cysteine 49-cysteine 57.

In terms of assembly, occurs as a monomer, dimer or trimer. The dimer may be the active form. Binds calcium, probably through His-3 to His-6.

In terms of biological role, protease inhibitor with activity against cysteine, aspartic and serine proteases. Highest activity against serine proteases, in particular trypsin and trypsin-like proteases. This Phaseolus acutifolius (Tepary bean) protein is Bowman-Birk type proteinase inhibitor.